The primary structure comprises 342 residues: N-acetyl-gamma-glutamyl-phosphate reductase (342 aa).

Cysteine 146 is an active-site residue.

It belongs to the NAGSA dehydrogenase family. Type 1 subfamily.

The protein resides in the cytoplasm. It carries out the reaction N-acetyl-L-glutamate 5-semialdehyde + phosphate + NADP(+) = N-acetyl-L-glutamyl 5-phosphate + NADPH + H(+). It participates in amino-acid biosynthesis; L-arginine biosynthesis; N(2)-acetyl-L-ornithine from L-glutamate: step 3/4. In terms of biological role, catalyzes the NADPH-dependent reduction of N-acetyl-5-glutamyl phosphate to yield N-acetyl-L-glutamate 5-semialdehyde. This Saccharopolyspora erythraea (strain ATCC 11635 / DSM 40517 / JCM 4748 / NBRC 13426 / NCIMB 8594 / NRRL 2338) protein is N-acetyl-gamma-glutamyl-phosphate reductase.